We begin with the raw amino-acid sequence, 328 residues long: UPF0252 protein PF0978 (328 aa).

A helical membrane pass occupies residues Val-3 to Pro-23.

The protein belongs to the UPF0252 family.

It localises to the membrane. This chain is UPF0252 protein PF0978, found in Pyrococcus furiosus (strain ATCC 43587 / DSM 3638 / JCM 8422 / Vc1).